We begin with the raw amino-acid sequence, 204 residues long: Cytochrome P450 monooxygenase PC-23 (204 aa).

Residue cysteine 138 coordinates heme.

The protein belongs to the cytochrome P450 family. Heme is required as a cofactor.

It functions in the pathway secondary metabolite biosynthesis. Its function is as follows. Cytochrome P450 monooxygenase; part of the gene cluster that mediates the biosynthesis of the indole diterpenes penitrems. The geranylgeranyl diphosphate (GGPP) synthase penG catalyzes the first step in penitrem biosynthesis via conversion of farnesyl pyrophosphate and isopentyl pyrophosphate into geranylgeranyl pyrophosphate (GGPP). Condensation of indole-3-glycerol phosphate with GGPP by the prenyl transferase penC then forms 3-geranylgeranylindole (3-GGI). Epoxidation by the FAD-dependent monooxygenase penM leads to a epoxidized-GGI that is substrate of the terpene cyclase penB for cyclization to yield paspaline. Paspaline is subsequently converted to 13-desoxypaxilline by the cytochrome P450 monooxygenase penP, the latter being then converted to paxilline by the cytochrome P450 monooxygenase penQ. Paxilline is converted to beta-paxitriol via C-10 ketoreduction by the short-chain dehydrogenase PC-15 which can be monoprenylated at the C-20 by the indole diterpene prenyltransferase penD. A two-step elimination (acetylation and elimination) process performed by the O-acetyltransferase PC-16 and the P.simplicissimum ptmI-ortholog not yet identified in P.crustosum, leads to the production of the prenylated form of penijanthine. The FAD-linked oxidoreductase ptmO then converts the prenylated form of penijanthine into PC-M5 which is in turn transformed into PC-M4 by the aromatic dimethylallyltransferase PC-22. A series of oxidation steps involving 4 cytochrome P450 monooxygenases (PC-21, PC-05, PC-23, PC-20) and a FAD-dependent monooxygenase (PC-14) are required for the transformation of PC-M4 to penitrems A and E. Synthesis of these final products is proposed to proceed via penitrems D and C (PC-21, PC-05, PC-14) and penitrems B and F (PC-21, PC-05, PC-14, PC-23). The polypeptide is Cytochrome P450 monooxygenase PC-23 (Penicillium crustosum (Blue mold fungus)).